Reading from the N-terminus, the 459-residue chain is Glutamate--tRNA ligase 1 (459 aa).

Positions 8–18 (PSPTGYIHIGN) match the 'HIGH' region motif. The 'KMSKS' region motif lies at 249-253 (GLSKR). K252 provides a ligand contact to ATP.

Belongs to the class-I aminoacyl-tRNA synthetase family. Glutamate--tRNA ligase type 1 subfamily. Monomer.

It localises to the cytoplasm. The catalysed reaction is tRNA(Glu) + L-glutamate + ATP = L-glutamyl-tRNA(Glu) + AMP + diphosphate. In terms of biological role, catalyzes the attachment of glutamate to tRNA(Glu) in a two-step reaction: glutamate is first activated by ATP to form Glu-AMP and then transferred to the acceptor end of tRNA(Glu). This is Glutamate--tRNA ligase 1 from Bartonella quintana (strain Toulouse) (Rochalimaea quintana).